The following is a 117-amino-acid chain: Large ribosomal subunit protein bL20 (117 aa).

The protein belongs to the bacterial ribosomal protein bL20 family.

Its function is as follows. Binds directly to 23S ribosomal RNA and is necessary for the in vitro assembly process of the 50S ribosomal subunit. It is not involved in the protein synthesizing functions of that subunit. This chain is Large ribosomal subunit protein bL20, found in Geobacter metallireducens (strain ATCC 53774 / DSM 7210 / GS-15).